The chain runs to 87 residues: Cobalt transport protein CbiN (87 aa).

The next 2 helical transmembrane spans lie at 4 to 24 and 58 to 78; these read LLLL…EWAG and MLFS…LGYY.

It belongs to the CbiN family. As to quaternary structure, forms an energy-coupling factor (ECF) transporter complex composed of an ATP-binding protein (A component, CbiO), a transmembrane protein (T component, CbiQ) and 2 possible substrate-capture proteins (S components, CbiM and CbiN) of unknown stoichimetry.

It localises to the cell membrane. Its pathway is cofactor biosynthesis; adenosylcobalamin biosynthesis. Functionally, part of the energy-coupling factor (ECF) transporter complex CbiMNOQ involved in cobalt import. This Archaeoglobus fulgidus (strain ATCC 49558 / DSM 4304 / JCM 9628 / NBRC 100126 / VC-16) protein is Cobalt transport protein CbiN.